Reading from the N-terminus, the 243-residue chain is Carboxy-S-adenosyl-L-methionine synthase (243 aa).

S-adenosyl-L-methionine-binding positions include Tyr40, 65-67 (GCS), 90-91 (DN), 118-119 (DI), Asn133, and Arg200.

The protein belongs to the class I-like SAM-binding methyltransferase superfamily. Cx-SAM synthase family. As to quaternary structure, homodimer.

The catalysed reaction is prephenate + S-adenosyl-L-methionine = carboxy-S-adenosyl-L-methionine + 3-phenylpyruvate + H2O. In terms of biological role, catalyzes the conversion of S-adenosyl-L-methionine (SAM) to carboxy-S-adenosyl-L-methionine (Cx-SAM). This chain is Carboxy-S-adenosyl-L-methionine synthase, found in Shewanella oneidensis (strain ATCC 700550 / JCM 31522 / CIP 106686 / LMG 19005 / NCIMB 14063 / MR-1).